Consider the following 382-residue polypeptide: ATP phosphoribosyltransferase regulatory subunit (382 aa).

This sequence belongs to the class-II aminoacyl-tRNA synthetase family. HisZ subfamily. In terms of assembly, heteromultimer composed of HisG and HisZ subunits.

The protein resides in the cytoplasm. Its pathway is amino-acid biosynthesis; L-histidine biosynthesis; L-histidine from 5-phospho-alpha-D-ribose 1-diphosphate: step 1/9. Its function is as follows. Required for the first step of histidine biosynthesis. May allow the feedback regulation of ATP phosphoribosyltransferase activity by histidine. This is ATP phosphoribosyltransferase regulatory subunit from Burkholderia cenocepacia (strain ATCC BAA-245 / DSM 16553 / LMG 16656 / NCTC 13227 / J2315 / CF5610) (Burkholderia cepacia (strain J2315)).